The sequence spans 148 residues: Hydrogenase expression/formation protein HoxO (148 aa).

The disordered stretch occupies residues I128 to S148. A compositionally biased stretch (polar residues) spans E134–S148.

Belongs to the HupG/HyaE family.

The protein is Hydrogenase expression/formation protein HoxO (hoxO) of Azotobacter vinelandii.